The sequence spans 310 residues: Tyrosine recombinase XerC (310 aa).

Positions Asn11 to Ile97 constitute a Core-binding (CB) domain. Positions Pro118–Asp298 constitute a Tyr recombinase domain. Residues Arg157, Lys181, His250, Arg253, and His276 contribute to the active site. Residue Tyr285 is the O-(3'-phospho-DNA)-tyrosine intermediate of the active site.

The protein belongs to the 'phage' integrase family. XerC subfamily. As to quaternary structure, forms a cyclic heterotetrameric complex composed of two molecules of XerC and two molecules of XerD.

It is found in the cytoplasm. In terms of biological role, site-specific tyrosine recombinase, which acts by catalyzing the cutting and rejoining of the recombining DNA molecules. The XerC-XerD complex is essential to convert dimers of the bacterial chromosome into monomers to permit their segregation at cell division. It also contributes to the segregational stability of plasmids. The polypeptide is Tyrosine recombinase XerC (Vibrio parahaemolyticus serotype O3:K6 (strain RIMD 2210633)).